A 377-amino-acid polypeptide reads, in one-letter code: Opsin-1 (377 aa).

At 1 to 58 the chain is on the extracellular side; it reads MDPGPGLAALQAWAAKSPAYGAANQTVVDKVPPDMMHMIDPHWYQFPPMNPLWHALLG. The N-linked (GlcNAc...) asparagine glycan is linked to Asn-24. A helical membrane pass occupies residues 59–79; sequence FTIGVLGFVSISGNGMVIYIF. Residues 80-92 are Cytoplasmic-facing; sequence MSTKSLKTPSNLL. A helical membrane pass occupies residues 93 to 113; sequence VVNLAFSDFLMMCAMSPAMVV. Topologically, residues 114-129 are extracellular; it reads NCYYETWVWGPFACEL. A disulfide bond links Cys-127 and Cys-204. The chain crosses the membrane as a helical span at residues 130–150; sequence YACAGSLFGCASIWTMTMIAF. The Cytoplasmic segment spans residues 151-169; it reads DRYNVIVKGIAAKPMTSNG. A helical transmembrane segment spans residues 170–190; that stretch reads ALLRILGIWVFSLAWTLLPFF. The Extracellular segment spans residues 191–220; that stretch reads GWNRYVPEGNMTACGTDYLSKSWVSRSYIL. The N-linked (GlcNAc...) asparagine glycan is linked to Asn-200. Residues 221–241 form a helical membrane-spanning segment; sequence IYSVFVYFLPLLLIIYSYFFI. Over 242–280 the chain is Cytoplasmic; it reads VQAVAAHEKAMREQAKKMNVASLRSSEAANTSAECKLAK. Residues 281-301 traverse the membrane as a helical segment; it reads VALMTISLWFMAWTPYLVINY. At 302 to 312 the chain is on the extracellular side; it reads TGVFESAPISP. The chain crosses the membrane as a helical span at residues 313–335; it reads LATIWGSLFAKANAVYNPIVYGI. Residues 336 to 377 lie on the Cytoplasmic side of the membrane; it reads SHPKYQAALYAKFPSLQCQSAPEDAGSVASGTTAVSEEKPAA. The disordered stretch occupies residues 357 to 377; it reads PEDAGSVASGTTAVSEEKPAA.

Belongs to the G-protein coupled receptor 1 family. Opsin subfamily. In terms of tissue distribution, in the retina, expression is abundant and uniform in the anterior-posterior and oblique cells of the retinulae, with some expression in the proximal cells. There is no expression in the dorsal rim retinulae (at protein level).

It is found in the cell projection. The protein resides in the rhabdomere membrane. In terms of biological role, visual pigments are the light-absorbing molecules that mediate vision. They consist of an apoprotein, opsin, covalently linked to cis-retinal. May play a role in photoperiodic photoreception. The chain is Opsin-1 (OP1) from Manduca sexta (Tobacco hawkmoth).